We begin with the raw amino-acid sequence, 343 residues long: Heat-inducible transcription repressor HrcA (343 aa).

This sequence belongs to the HrcA family.

Functionally, negative regulator of class I heat shock genes (grpE-dnaK-dnaJ and groELS operons). Prevents heat-shock induction of these operons. In Mycolicibacterium smegmatis (strain ATCC 700084 / mc(2)155) (Mycobacterium smegmatis), this protein is Heat-inducible transcription repressor HrcA.